We begin with the raw amino-acid sequence, 190 residues long: UPF0149 protein NT01EI_3357 (190 aa).

The protein belongs to the UPF0149 family.

This Edwardsiella ictaluri (strain 93-146) protein is UPF0149 protein NT01EI_3357.